Consider the following 185-residue polypeptide: Translation initiation factor IF-3 (185 aa).

It belongs to the IF-3 family. In terms of assembly, monomer.

It is found in the cytoplasm. IF-3 binds to the 30S ribosomal subunit and shifts the equilibrium between 70S ribosomes and their 50S and 30S subunits in favor of the free subunits, thus enhancing the availability of 30S subunits on which protein synthesis initiation begins. This is Translation initiation factor IF-3 from Rickettsia typhi (strain ATCC VR-144 / Wilmington).